Here is a 206-residue protein sequence, read N- to C-terminus: uncharacterized protein (206 aa).

Helical transmembrane passes span 9–29, 47–67, 74–94, and 150–170; these read ILSL…SVLT, LGVV…LAFL, FFVI…INTI, and IAVI…FYAF.

It belongs to the Rht family.

It localises to the cell membrane. This is an uncharacterized protein from Synechocystis sp. (strain ATCC 27184 / PCC 6803 / Kazusa).